Consider the following 103-residue polypeptide: MSGRGKGGKGLGKGGAKRHRKVLRDNIQGITKPAIRRLARRGGVKRISGLIYEETRGVLKVFLENVIRDAVTYTEHAKRKTVTALDVVYALKRQGRTLYGFGG.

A compositionally biased stretch (gly residues) spans 1 to 14; that stretch reads MSGRGKGGKGLGKG. The disordered stretch occupies residues 1-20; that stretch reads MSGRGKGGKGLGKGGAKRHR. K6, K9, K13, K17, K32, and K45 each carry N6-(2-hydroxyisobutyryl)lysine; alternate. K6 carries the post-translational modification N6-acetyl-N6-methyllysine; alternate. N6-butyryllysine; alternate is present on residues K6, K9, K13, K17, K32, and K45. K6 carries the post-translational modification N6-glutaryllysine; alternate. K9 bears the N6-propionyllysine; alternate mark. Residue K13 is modified to N6-acetyl-N6-methyllysine; alternate. An N6-glutaryllysine; alternate modification is found at K13. 3 positions are modified to N6-propionyllysine; alternate: K17, K32, and K45. Residues 17–21 mediate DNA binding; that stretch reads KRHRK. K32 carries the post-translational modification N6-glutaryllysine; alternate. K32 carries the post-translational modification N6-succinyllysine; alternate. K60, K78, K80, and K92 each carry N6-glutaryllysine; alternate. K60 bears the N6-(2-hydroxyisobutyryl)lysine mark. 3 positions are modified to N6-(2-hydroxyisobutyryl)lysine; alternate: K78, K80, and K92. An N6-butyryllysine; alternate mark is found at K78, K80, and K92. Residues K78, K80, and K92 each carry the N6-propionyllysine; alternate modification. N6-succinyllysine is present on K78. N6-succinyllysine; alternate is present on K92.

This sequence belongs to the histone H4 family. As to quaternary structure, the nucleosome is a histone octamer containing two molecules each of H2A, H2B, H3 and H4 assembled in one H3-H4 heterotetramer and two H2A-H2B heterodimers. The octamer wraps approximately 147 bp of DNA. In terms of processing, butyrylation of histones marks active promoters and competes with histone acetylation. Glutarylation at Lys-92 (H4K91glu) destabilizes nucleosomes by promoting dissociation of the H2A-H2B dimers from nucleosomes.

The protein resides in the nucleus. It localises to the chromosome. Core component of nucleosome. Nucleosomes wrap and compact DNA into chromatin, limiting DNA accessibility to the cellular machineries which require DNA as a template. Histones thereby play a central role in transcription regulation, DNA repair, DNA replication and chromosomal stability. DNA accessibility is regulated via a complex set of post-translational modifications of histones, also called histone code, and nucleosome remodeling. The protein is Histone H4 (H4.1) of Oikopleura dioica (Tunicate).